A 330-amino-acid polypeptide reads, in one-letter code: L-asparaginase (330 aa).

In terms of domain architecture, Asparaginase/glutaminase spans 4–330 (PQVTILATGG…EAIQKIFSTY (327 aa)). Thr-14 functions as the O-isoaspartyl threonine intermediate in the catalytic mechanism. 93 to 94 (TD) is a substrate binding site.

This sequence belongs to the asparaginase 1 family. Homotetramer.

The protein resides in the cytoplasm. The catalysed reaction is L-asparagine + H2O = L-aspartate + NH4(+). In Wolinella succinogenes (strain ATCC 29543 / DSM 1740 / CCUG 13145 / JCM 31913 / LMG 7466 / NCTC 11488 / FDC 602W) (Vibrio succinogenes), this protein is L-asparaginase (ansA).